The chain runs to 698 residues: Elongation factor G 1 (698 aa).

One can recognise a tr-type G domain in the interval 8-290 (ERYRNIGIVA…AVVDFLPAPI (283 aa)). Residues 17-24 (AHVDAGKT), 88-92 (DTPGH), and 142-145 (NKMD) contribute to the GTP site.

Belongs to the TRAFAC class translation factor GTPase superfamily. Classic translation factor GTPase family. EF-G/EF-2 subfamily.

It localises to the cytoplasm. Catalyzes the GTP-dependent ribosomal translocation step during translation elongation. During this step, the ribosome changes from the pre-translocational (PRE) to the post-translocational (POST) state as the newly formed A-site-bound peptidyl-tRNA and P-site-bound deacylated tRNA move to the P and E sites, respectively. Catalyzes the coordinated movement of the two tRNA molecules, the mRNA and conformational changes in the ribosome. The polypeptide is Elongation factor G 1 (Shewanella frigidimarina (strain NCIMB 400)).